A 269-amino-acid polypeptide reads, in one-letter code: NAD kinase (269 aa).

Asp-45 functions as the Proton acceptor in the catalytic mechanism. Residues 45–46, 122–123, Arg-149, Asp-151, and Ala-186 contribute to the NAD(+) site; these read DG and NE.

It belongs to the NAD kinase family. A divalent metal cation is required as a cofactor.

The protein localises to the cytoplasm. The catalysed reaction is NAD(+) + ATP = ADP + NADP(+) + H(+). Its function is as follows. Involved in the regulation of the intracellular balance of NAD and NADP, and is a key enzyme in the biosynthesis of NADP. Catalyzes specifically the phosphorylation on 2'-hydroxyl of the adenosine moiety of NAD to yield NADP. The chain is NAD kinase from Staphylococcus saprophyticus subsp. saprophyticus (strain ATCC 15305 / DSM 20229 / NCIMB 8711 / NCTC 7292 / S-41).